A 497-amino-acid polypeptide reads, in one-letter code: Serine hydroxymethyltransferase (497 aa).

Residues leucine 176 and 180 to 182 (GHL) each bind (6S)-5,6,7,8-tetrahydrofolate. N6-(pyridoxal phosphate)lysine is present on lysine 289.

The protein belongs to the SHMT family. As to quaternary structure, homodimer. The cofactor is pyridoxal 5'-phosphate.

The protein resides in the cytoplasm. The enzyme catalyses (6R)-5,10-methylene-5,6,7,8-tetrahydrofolate + glycine + H2O = (6S)-5,6,7,8-tetrahydrofolate + L-serine. It participates in one-carbon metabolism; tetrahydrofolate interconversion. It functions in the pathway amino-acid biosynthesis; glycine biosynthesis; glycine from L-serine: step 1/1. In terms of biological role, catalyzes the reversible interconversion of serine and glycine with tetrahydrofolate (THF) serving as the one-carbon carrier. This reaction serves as the major source of one-carbon groups required for the biosynthesis of purines, thymidylate, methionine, and other important biomolecules. Also exhibits THF-independent aldolase activity toward beta-hydroxyamino acids, producing glycine and aldehydes, via a retro-aldol mechanism. The sequence is that of Serine hydroxymethyltransferase from Chlamydia trachomatis serovar L2b (strain UCH-1/proctitis).